We begin with the raw amino-acid sequence, 90 residues long: Small ribosomal subunit protein uS15 (90 aa).

The protein belongs to the universal ribosomal protein uS15 family. As to quaternary structure, part of the 30S ribosomal subunit. Forms a bridge to the 50S subunit in the 70S ribosome, contacting the 23S rRNA.

Its function is as follows. One of the primary rRNA binding proteins, it binds directly to 16S rRNA where it helps nucleate assembly of the platform of the 30S subunit by binding and bridging several RNA helices of the 16S rRNA. Functionally, forms an intersubunit bridge (bridge B4) with the 23S rRNA of the 50S subunit in the ribosome. The chain is Small ribosomal subunit protein uS15 from Campylobacter lari (strain RM2100 / D67 / ATCC BAA-1060).